A 207-amino-acid chain; its full sequence is Octanoyltransferase (207 aa).

The BPL/LPL catalytic domain maps to 27–203 (ASTEDELWVV…HLETQFTPKA (177 aa)). Substrate contacts are provided by residues 66–73 (RGGQITYH), 133–135 (SLG), and 146–148 (GLA). Cys164 serves as the catalytic Acyl-thioester intermediate.

This sequence belongs to the LipB family.

It localises to the cytoplasm. The enzyme catalyses octanoyl-[ACP] + L-lysyl-[protein] = N(6)-octanoyl-L-lysyl-[protein] + holo-[ACP] + H(+). It participates in protein modification; protein lipoylation via endogenous pathway; protein N(6)-(lipoyl)lysine from octanoyl-[acyl-carrier-protein]: step 1/2. Its function is as follows. Catalyzes the transfer of endogenously produced octanoic acid from octanoyl-acyl-carrier-protein onto the lipoyl domains of lipoate-dependent enzymes. Lipoyl-ACP can also act as a substrate although octanoyl-ACP is likely to be the physiological substrate. The protein is Octanoyltransferase of Neisseria meningitidis serogroup C / serotype 2a (strain ATCC 700532 / DSM 15464 / FAM18).